Reading from the N-terminus, the 317-residue chain is Ribosomal RNA small subunit methyltransferase H (317 aa).

S-adenosyl-L-methionine contacts are provided by residues 37–39 (AGH), aspartate 56, phenylalanine 85, aspartate 106, and glutamine 113.

Belongs to the methyltransferase superfamily. RsmH family.

The protein localises to the cytoplasm. The catalysed reaction is cytidine(1402) in 16S rRNA + S-adenosyl-L-methionine = N(4)-methylcytidine(1402) in 16S rRNA + S-adenosyl-L-homocysteine + H(+). Specifically methylates the N4 position of cytidine in position 1402 (C1402) of 16S rRNA. The protein is Ribosomal RNA small subunit methyltransferase H of Lactococcus lactis subsp. cremoris (strain SK11).